The sequence spans 417 residues: Lysosome-associated membrane glycoprotein 1 (417 aa).

Residues 1 to 28 (MAAPGSARRPLLLLLLLLLLGLMHCASA) form the signal peptide. The interval 29-194 (AMFMVKNGNG…SRGETRCEQD (166 aa)) is first lumenal domain. Over 29–382 (AMFMVKNGNG…EECLLDENSM (354 aa)) the chain is Lumenal. N-linked (GlcNAc...) asparagine glycosylation is found at N37 and N45. C41 and C80 are disulfide-bonded. N-linked (GlcNAc...) (polylactosaminoglycan) asparagine glycosylation is present at N62. Residues N76, N84, N103, and N107 are each glycosylated (N-linked (GlcNAc...) asparagine). 2 N-linked (GlcNAc...) (polylactosaminoglycan) asparagine glycosylation sites follow: N121 and N130. Cysteines 155 and 191 form a disulfide. Residues N165 and N181 are each glycosylated (N-linked (GlcNAc...) asparagine). Residues 184–221 (FSRGETRCEQDRPSPTTAPPAPPSPSPSPVPKSPSVDK) form a disordered region. The hinge stretch occupies residues 195–227 (RPSPTTAPPAPPSPSPSPVPKSPSVDKYNVSGT). An O-linked (GalNAc...) serine; partial glycan is attached at S197. O-linked (GalNAc...) threonine glycosylation is found at T199 and T200. Residues 199–215 (TTAPPAPPSPSPSPVPK) show a composition bias toward pro residues. S207, S209, and S211 each carry an O-linked (GalNAc...) serine glycan. N223 and N228 each carry an N-linked (GlcNAc...) (polylactosaminoglycan) asparagine glycan. The segment at 228–382 (NGTCLLASMG…EECLLDENSM (155 aa)) is second lumenal domain. C231 and C269 form a disulfide bridge. N-linked (GlcNAc...) asparagine glycans are attached at residues N241, N249, N261, N293, and N322. A disulfide bridge links C338 with C375. The helical transmembrane segment at 383 to 410 (LIPIAVGGALAGLVLIVLIAYLVGRKRS) threads the bilayer. The Cytoplasmic segment spans residues 411–417 (HAGYQTI).

It belongs to the LAMP family. Interacts with ABCB9; this interaction strongly stabilizes ABCB9 and protects ABCB9 against lysosomal degradation. Interacts with FURIN. Interacts with TMEM175; inhibiting the proton channel activity of TMEM175. In terms of assembly, (Microbial infection) Interacts with Lassa virus protein glycoprotein. As to quaternary structure, (Microbial infection) Interacts with mumps virus protein F; this interaction promotes protein F cleavage by FURIN. In terms of processing, O- and N-glycosylated; some of the 18 N-linked glycans are polylactosaminoglycans. (Microbial infection) The glycosylation of Asn-76 is essential for Lassa virus entry into cells.

The protein localises to the lysosome membrane. It localises to the endosome membrane. The protein resides in the late endosome membrane. It is found in the cell membrane. Its subcellular location is the cytolytic granule membrane. Functionally, lysosomal membrane glycoprotein which plays an important role in lysosome biogenesis, lysosomal pH regulation, autophagy and cholesterol homeostasis. Acts as an important regulator of lysosomal lumen pH regulation by acting as a direct inhibitor of the proton channel TMEM175, facilitating lysosomal acidification for optimal hydrolase activity. Also plays an important role in NK-cells cytotoxicity. Mechanistically, participates in cytotoxic granule movement to the cell surface and perforin trafficking to the lytic granule. In addition, protects NK-cells from degranulation-associated damage induced by their own cytotoxic granule content. Presents carbohydrate ligands to selectins. Its function is as follows. (Microbial infection) Acts as a receptor for Lassa virus glycoprotein. Also promotes fusion of the virus with host membrane in less acidic endosomes. In terms of biological role, (Microbial infection) Supports the FURIN-mediated cleavage of mumps virus fusion protein F by interacting with both FURIN and the unprocessed form but not the processed form of the viral protein F. The protein is Lysosome-associated membrane glycoprotein 1 of Homo sapiens (Human).